Reading from the N-terminus, the 667-residue chain is DNA ligase (667 aa).

Residues 32–36, 81–82, and E110 contribute to the NAD(+) site; these read DSEYD and SL. The active-site N6-AMP-lysine intermediate is the K112. R133, E167, K283, and K307 together coordinate NAD(+). C401, C404, C419, and C424 together coordinate Zn(2+). The BRCT domain maps to 586–667; it reads EGHPEFSGKT…FVDKQNELNS (82 aa).

It belongs to the NAD-dependent DNA ligase family. LigA subfamily. Mg(2+) serves as cofactor. The cofactor is Mn(2+).

It catalyses the reaction NAD(+) + (deoxyribonucleotide)n-3'-hydroxyl + 5'-phospho-(deoxyribonucleotide)m = (deoxyribonucleotide)n+m + AMP + beta-nicotinamide D-nucleotide.. In terms of biological role, DNA ligase that catalyzes the formation of phosphodiester linkages between 5'-phosphoryl and 3'-hydroxyl groups in double-stranded DNA using NAD as a coenzyme and as the energy source for the reaction. It is essential for DNA replication and repair of damaged DNA. The sequence is that of DNA ligase from Staphylococcus aureus (strain bovine RF122 / ET3-1).